We begin with the raw amino-acid sequence, 389 residues long: Na(+)/H(+) antiporter NhaA (389 aa).

Transmembrane regions (helical) follow at residues isoleucine 17–leucine 37, leucine 59–valine 79, serine 95–phenylalanine 115, valine 124–leucine 144, valine 154–phenylalanine 174, serine 177–leucine 197, leucine 213–isoleucine 233, phenylalanine 261–leucine 281, proline 287–phenylalanine 307, isoleucine 328–leucine 348, and leucine 363–valine 383.

The protein belongs to the NhaA Na(+)/H(+) (TC 2.A.33) antiporter family.

The protein localises to the cell inner membrane. It catalyses the reaction Na(+)(in) + 2 H(+)(out) = Na(+)(out) + 2 H(+)(in). In terms of biological role, na(+)/H(+) antiporter that extrudes sodium in exchange for external protons. This chain is Na(+)/H(+) antiporter NhaA, found in Shewanella sp. (strain ANA-3).